The sequence spans 168 residues: RNA pyrophosphohydrolase (168 aa).

In terms of domain architecture, Nudix hydrolase spans 8-160 (PYRTCVGIAL…KRPVYERVAK (153 aa)). The Nudix box motif lies at 47–68 (GGVDPGEDAWEAAKRELYEETS).

The protein belongs to the Nudix hydrolase family. RppH subfamily. The cofactor is a divalent metal cation.

Its function is as follows. Accelerates the degradation of transcripts by removing pyrophosphate from the 5'-end of triphosphorylated RNA, leading to a more labile monophosphorylated state that can stimulate subsequent ribonuclease cleavage. This Bradyrhizobium sp. (strain ORS 278) protein is RNA pyrophosphohydrolase.